The sequence spans 211 residues: MQDPHVPSSPTISSVSSSDLDTESTGSFFHDRSITLGTLMGFSFTATMPMPFRASSRRHVSPSVAISRASSSNARRNHQRKRPPSNSAEPEPHRRRKWWRFCRDDDDDAAGNGIHRGTGDSKRSSLGEYLEVERRFGDEAVYNSAEAELEDAVVARYQDQQPVMGERALFADGRVLPPASAEVVTGEGTPVATSLCRFPVSLTGICSGGGG.

Low complexity-rich tracts occupy residues 1 to 19 (MQDP…SSSD) and 61 to 74 (SPSV…SSNA). Disordered stretches follow at residues 1–27 (MQDP…STGS) and 54–94 (ASSR…EPHR).

In terms of assembly, interacts with RLK902. In terms of tissue distribution, expressed in inflorescences, stems, rosette leaves and weakly in roots.

This is an uncharacterized protein from Arabidopsis thaliana (Mouse-ear cress).